The sequence spans 219 residues: Small ribosomal subunit protein uS3c (219 aa).

Residues Ile-39–Lys-109 enclose the KH type-2 domain.

Belongs to the universal ribosomal protein uS3 family. In terms of assembly, part of the 30S ribosomal subunit.

It localises to the plastid. It is found in the cyanelle. In Cyanophora paradoxa, this protein is Small ribosomal subunit protein uS3c (rps3).